A 209-amino-acid chain; its full sequence is APC/C-CDH1 modulator 1 (209 aa).

Residues Met-1 to Gln-38 form a disordered region. At Ser-48 the chain carries Phosphoserine. Thr-161 is modified (phosphothreonine). Ser-202 is modified (phosphoserine).

Interacts with CDH1, BMH1 and BMH2.

Functionally, negative regulator of GDH1, the activator protein that regulates the ubiquitin ligase activity and substrate specificity of the anaphase promoting complex/cyclosome (APC/C), and which is required for exit from mitosis, cytokinesis and formation of prereplicative complexes in G1. The sequence is that of APC/C-CDH1 modulator 1 (ACM1) from Saccharomyces cerevisiae (strain ATCC 204508 / S288c) (Baker's yeast).